A 748-amino-acid chain; its full sequence is Formate acetyltransferase (748 aa).

In terms of domain architecture, PFL spans 5-618 (NNHTNAWQGF…KTGNTPDGRK (614 aa)). C412 functions as the S-acetylcysteine intermediate in the catalytic mechanism. C413 functions as the Cysteine radical intermediate in the catalytic mechanism. Positions 625–748 (PGANPMHGRD…VISRTFHESM (124 aa)) constitute a Glycine radical domain. G723 carries the glycine radical modification.

This sequence belongs to the glycyl radical enzyme (GRE) family. PFL subfamily. In terms of assembly, homodimer.

The protein localises to the cytoplasm. The catalysed reaction is formate + acetyl-CoA = pyruvate + CoA. It participates in fermentation; pyruvate fermentation; formate from pyruvate: step 1/1. Its function is as follows. Catalyzes the conversion of pyruvate to formate and acetyl-CoA. The protein is Formate acetyltransferase (pflB) of Staphylococcus epidermidis (strain ATCC 12228 / FDA PCI 1200).